The primary structure comprises 459 residues: Argininosuccinate lyase (459 aa).

The disordered stretch occupies residues 440–459; that stretch reads DEKKLEELRQNENRDNVYNP.

Belongs to the lyase 1 family. Argininosuccinate lyase subfamily.

Its subcellular location is the cytoplasm. The catalysed reaction is 2-(N(omega)-L-arginino)succinate = fumarate + L-arginine. It functions in the pathway amino-acid biosynthesis; L-arginine biosynthesis; L-arginine from L-ornithine and carbamoyl phosphate: step 3/3. In Pyrococcus furiosus (strain ATCC 43587 / DSM 3638 / JCM 8422 / Vc1), this protein is Argininosuccinate lyase.